We begin with the raw amino-acid sequence, 257 residues long: Acetyl-coenzyme A carboxylase carboxyl transferase subunit beta (257 aa).

A CoA carboxyltransferase N-terminal domain is found at 5–257 (VFTKCERCKQ…DLERLLGFVG (253 aa)). Residues Cys-9, Cys-12, Cys-28, and Cys-31 each coordinate Zn(2+). The C4-type zinc finger occupies 9–31 (CERCKQPVYEKDLRARFNVCPNC).

The protein belongs to the AccD/PCCB family. In terms of assembly, acetyl-CoA carboxylase is a heterohexamer composed of biotin carboxyl carrier protein (AccB), biotin carboxylase (AccC) and two subunits each of ACCase subunit alpha (AccA) and ACCase subunit beta (AccD). It depends on Zn(2+) as a cofactor.

The protein resides in the cytoplasm. It catalyses the reaction N(6)-carboxybiotinyl-L-lysyl-[protein] + acetyl-CoA = N(6)-biotinyl-L-lysyl-[protein] + malonyl-CoA. It participates in lipid metabolism; malonyl-CoA biosynthesis; malonyl-CoA from acetyl-CoA: step 1/1. In terms of biological role, component of the acetyl coenzyme A carboxylase (ACC) complex. Biotin carboxylase (BC) catalyzes the carboxylation of biotin on its carrier protein (BCCP) and then the CO(2) group is transferred by the transcarboxylase to acetyl-CoA to form malonyl-CoA. The chain is Acetyl-coenzyme A carboxylase carboxyl transferase subunit beta from Rubrobacter xylanophilus (strain DSM 9941 / JCM 11954 / NBRC 16129 / PRD-1).